The primary structure comprises 115 residues: Large ribosomal subunit protein eL30 (115 aa).

It belongs to the eukaryotic ribosomal protein eL30 family. In terms of assembly, component of the large ribosomal subunit.

The protein localises to the cytoplasm. Functionally, component of the large ribosomal subunit. The ribosome is a large ribonucleoprotein complex responsible for the synthesis of proteins in the cell. This Gallus gallus (Chicken) protein is Large ribosomal subunit protein eL30 (RPL30).